The sequence spans 245 residues: Ribonuclease PH (245 aa).

Phosphate is bound by residues Arg87 and 125 to 127 (GTR).

It belongs to the RNase PH family. In terms of assembly, homohexameric ring arranged as a trimer of dimers.

The enzyme catalyses tRNA(n+1) + phosphate = tRNA(n) + a ribonucleoside 5'-diphosphate. Phosphorolytic 3'-5' exoribonuclease that plays an important role in tRNA 3'-end maturation. Removes nucleotide residues following the 3'-CCA terminus of tRNAs; can also add nucleotides to the ends of RNA molecules by using nucleoside diphosphates as substrates, but this may not be physiologically important. Probably plays a role in initiation of 16S rRNA degradation (leading to ribosome degradation) during starvation. This Streptomyces coelicolor (strain ATCC BAA-471 / A3(2) / M145) protein is Ribonuclease PH.